A 53-amino-acid polypeptide reads, in one-letter code: Large ribosomal subunit protein bL32c (53 aa).

Belongs to the bacterial ribosomal protein bL32 family.

The protein localises to the plastid. Its subcellular location is the chloroplast. This Phaseolus vulgaris (Kidney bean) protein is Large ribosomal subunit protein bL32c.